The sequence spans 354 residues: Dual-specificity RNA methyltransferase RlmN (354 aa).

Glu-89 acts as the Proton acceptor in catalysis. One can recognise a Radical SAM core domain in the interval 106–339 (KEAKYTVCVS…CTIRKSKGMD (234 aa)). An intrachain disulfide couples Cys-113 to Cys-344. Positions 120, 124, and 127 each coordinate [4Fe-4S] cluster. S-adenosyl-L-methionine-binding positions include 170 to 171 (GE), Ser-202, 225 to 227 (SLH), and Asn-301. The S-methylcysteine intermediate role is filled by Cys-344.

It belongs to the radical SAM superfamily. RlmN family. [4Fe-4S] cluster serves as cofactor.

It localises to the cytoplasm. The enzyme catalyses adenosine(2503) in 23S rRNA + 2 reduced [2Fe-2S]-[ferredoxin] + 2 S-adenosyl-L-methionine = 2-methyladenosine(2503) in 23S rRNA + 5'-deoxyadenosine + L-methionine + 2 oxidized [2Fe-2S]-[ferredoxin] + S-adenosyl-L-homocysteine. The catalysed reaction is adenosine(37) in tRNA + 2 reduced [2Fe-2S]-[ferredoxin] + 2 S-adenosyl-L-methionine = 2-methyladenosine(37) in tRNA + 5'-deoxyadenosine + L-methionine + 2 oxidized [2Fe-2S]-[ferredoxin] + S-adenosyl-L-homocysteine. Specifically methylates position 2 of adenine 2503 in 23S rRNA and position 2 of adenine 37 in tRNAs. m2A2503 modification seems to play a crucial role in the proofreading step occurring at the peptidyl transferase center and thus would serve to optimize ribosomal fidelity. The chain is Dual-specificity RNA methyltransferase RlmN from Nautilia profundicola (strain ATCC BAA-1463 / DSM 18972 / AmH).